A 624-amino-acid chain; its full sequence is Anti-CBASS protein Acb1 (624 aa).

Tyr-106 serves as a coordination point for 3',3'-cGAMP. Tyr-106 is a 3',3'-cUAMP binding site. Residues His-503, Thr-505, His-581, and Thr-583 contribute to the active site. Trp-617 contacts 3',3'-cGAMP. Trp-617 serves as a coordination point for 3',3'-cUAMP.

Belongs to the anti-CBASS protein Acb1 family.

It catalyses the reaction 3',3'-cUAMP + H2O = U[3'-5']pAp[3'] + H(+). The enzyme catalyses 3',3',3'-c-tri-AMP + H2O = A[3'-5']pA[3'-5']pAp[3'] + H(+). The catalysed reaction is 3',3',3'-cAAG + H2O = G[3'-5']pA[3'-5']pAp[3'] + H(+). It carries out the reaction 3',3',3'-cAAG + H2O = A[3'-5']pG[3'-5']pAp[3'] + H(+). It catalyses the reaction 3',3'-cGAMP + H2O = G[3'-5']pAp[3'] + H(+). In terms of biological role, counteracts or regulates the endogenous CBASS antiviral defense system. Phosphodiesterase that enables metal-independent hydrolysis of the host cyclic di- and trinucleotide CBASS signals such as 3'3'-cGAMP, 3'3'cUA, and 3'3'3'-cAAA. The sequence is that of Anti-CBASS protein Acb1 from Sphingomonas paeninsulae.